The following is a 346-amino-acid chain: Phosphate acyltransferase (346 aa).

It belongs to the PlsX family. In terms of assembly, homodimer. Probably interacts with PlsY.

Its subcellular location is the cytoplasm. The enzyme catalyses a fatty acyl-[ACP] + phosphate = an acyl phosphate + holo-[ACP]. It functions in the pathway lipid metabolism; phospholipid metabolism. In terms of biological role, catalyzes the reversible formation of acyl-phosphate (acyl-PO(4)) from acyl-[acyl-carrier-protein] (acyl-ACP). This enzyme utilizes acyl-ACP as fatty acyl donor, but not acyl-CoA. The protein is Phosphate acyltransferase of Brucella ovis (strain ATCC 25840 / 63/290 / NCTC 10512).